Consider the following 75-residue polypeptide: MARFFRRRKFCRFTAEGVTEIDYKDIATLKNYITESGKIVPSRITGTSAKYQRQLSSAIKRARFLALLPYTDSHK.

Belongs to the bacterial ribosomal protein bS18 family. In terms of assembly, part of the 30S ribosomal subunit. Forms a tight heterodimer with protein bS6.

Functionally, binds as a heterodimer with protein bS6 to the central domain of the 16S rRNA, where it helps stabilize the platform of the 30S subunit. The polypeptide is Small ribosomal subunit protein bS18 (Alteromonas mediterranea (strain DSM 17117 / CIP 110805 / LMG 28347 / Deep ecotype)).